The primary structure comprises 513 residues: ATP synthase subunit alpha (513 aa).

An ATP-binding site is contributed by 169-176; sequence GDRQTGKT.

Belongs to the ATPase alpha/beta chains family. In terms of assembly, F-type ATPases have 2 components, CF(1) - the catalytic core - and CF(0) - the membrane proton channel. CF(1) has five subunits: alpha(3), beta(3), gamma(1), delta(1), epsilon(1). CF(0) has three main subunits: a(1), b(2) and c(9-12). The alpha and beta chains form an alternating ring which encloses part of the gamma chain. CF(1) is attached to CF(0) by a central stalk formed by the gamma and epsilon chains, while a peripheral stalk is formed by the delta and b chains.

It is found in the cell inner membrane. The catalysed reaction is ATP + H2O + 4 H(+)(in) = ADP + phosphate + 5 H(+)(out). In terms of biological role, produces ATP from ADP in the presence of a proton gradient across the membrane. The alpha chain is a regulatory subunit. The polypeptide is ATP synthase subunit alpha (Shewanella putrefaciens (strain CN-32 / ATCC BAA-453)).